A 168-amino-acid polypeptide reads, in one-letter code: Nascent polypeptide-associated complex subunit alpha (168 aa).

The region spanning 14–78 is the NAC-A/B domain; the sequence is SKNEKKAREL…PKVDDFTRRL (65 aa). The segment at 83 to 129 is disordered; it reads QQAASAAKDPQSIQADMAAAAAAPAAPAAPAAAPEEDEAGQVDESGL. Low complexity predominate over residues 100 to 115; it reads AAAAAAPAAPAAPAAA. The UBA domain maps to 129–168; sequence LDGQDIELVMQQANVSRNKAVKALREHNSDIVNAIMSLSK.

It belongs to the NAC-alpha family. Part of the nascent polypeptide-associated complex (NAC), consisting of EGD2 and EGD1. NAC associates with ribosomes via EGD1.

Its subcellular location is the cytoplasm. The protein resides in the nucleus. Functionally, component of the nascent polypeptide-associated complex (NAC), a dynamic component of the ribosomal exit tunnel, protecting the emerging polypeptides from interaction with other cytoplasmic proteins to ensure appropriate nascent protein targeting. The NAC complex also promotes mitochondrial protein import by enhancing productive ribosome interactions with the outer mitochondrial membrane and blocks the inappropriate interaction of ribosomes translating non-secretory nascent polypeptides with translocation sites in the membrane of the endoplasmic reticulum. EGD2 may also be involved in transcription regulation. This Eremothecium gossypii (strain ATCC 10895 / CBS 109.51 / FGSC 9923 / NRRL Y-1056) (Yeast) protein is Nascent polypeptide-associated complex subunit alpha (EGD2).